The sequence spans 317 residues: Carbonic anhydrase 5B, mitochondrial (317 aa).

A mitochondrion-targeting transit peptide spans 1–33 (MAVMNHLRVILQVSSSTLPWRRCWVPRLVPRRS). The 260-residue stretch at 37-296 (YTCTYRTRNR…LMNRTVRSSF (260 aa)) folds into the Alpha-carbonic anhydrase domain. 3 residues coordinate Zn(2+): histidine 130, histidine 132, and histidine 155. A substrate-binding site is contributed by 235-236 (TT).

It belongs to the alpha-carbonic anhydrase family. It depends on Zn(2+) as a cofactor. Expressed in the heart, liver, lung, kidney, testis, and skeletal muscle (at protein level).

It is found in the mitochondrion. It carries out the reaction hydrogencarbonate + H(+) = CO2 + H2O. Its function is as follows. Mitochondrial carbonic anhydrase that catalyzes the reversible conversion of carbon dioxide to bicarbonate/HCO3. In Mus musculus (Mouse), this protein is Carbonic anhydrase 5B, mitochondrial (Ca5b).